Here is a 661-residue protein sequence, read N- to C-terminus: CD180 antigen (661 aa).

Residues 1-23 (MAFDVSCFFWVVLFSAGCKVITS) form the signal peptide. Topologically, residues 24–626 (WDQMCIEKEA…KLSDVKLSCG (603 aa)) are extracellular. Residues 33-53 (ANKTYNCENLGLSEIPDTLPN) form the LRRNT domain. N-linked (GlcNAc...) asparagine glycans are attached at residues Asn34, Asn53, Asn70, and Asn78. 7 LRR repeats span residues 54–75 (TTEF…TFSR), 78–99 (NLTF…TFQS), 102–123 (QLST…SLNG), 126–147 (SLKH…PVHN), 150–171 (NLES…KDFP), 174–195 (NLKV…DMRS), and 201–221 (NLSL…AFDS). Residues Asn201, Asn234, and Asn244 are each glycosylated (N-linked (GlcNAc...) asparagine). 5 LRR repeats span residues 275 to 296 (SVES…TFQC), 299 to 320 (QLQE…MKGL), 322 to 343 (LLKK…SAAN), 346 to 366 (SLTH…VGCL), and 371 to 391 (NLQT…CSLQ). Asn394 and Asn402 each carry an N-linked (GlcNAc...) asparagine glycan. LRR repeat units follow at residues 397 to 418 (HLQT…AFKE), 421 to 442 (QLEL…SPFQ), 446 to 466 (FLQV…HLLA), 470 to 493 (VLRH…NLLQ), 497 to 518 (SLEV…AFHS), 521 to 544 (KMSH…SHLK), and 546 to 564 (IYLN…RLLP). N-linked (GlcNAc...) asparagine glycosylation occurs at Asn451. N-linked (GlcNAc...) asparagine glycosylation occurs at Asn573. In terms of domain architecture, LRRCT spans 577–627 (NPLDCTCSNIHFLTWYKENLHKLEGSEETTCANPPSLRGVKLSDVKLSCGI). Residues 627–650 (ITAIGIFFLIVFLLLLAILLFFAV) form a helical membrane-spanning segment. Over 651 to 661 (KYLLRWKYQHI) the chain is Cytoplasmic.

This sequence belongs to the Toll-like receptor family. As to quaternary structure, M-shaped tetramer of two CD180-LY86 heterodimers. As to expression, expressed mainly on mature peripherical B cells. Detected in spleen, lymph node and appendix. Not detected in pre-B and -T cells.

It is found in the cell membrane. Its function is as follows. May cooperate with MD-1 and TLR4 to mediate the innate immune response to bacterial lipopolysaccharide (LPS) in B-cells. Leads to NF-kappa-B activation. Also involved in the life/death decision of B-cells. The sequence is that of CD180 antigen (CD180) from Homo sapiens (Human).